The sequence spans 539 residues: Phosphoenolpyruvate carboxykinase (ATP) (539 aa).

Arg64, Tyr206, and Lys212 together coordinate substrate. Residues Lys212, His231, and 247-255 contribute to the ATP site; that span reads GLSGTGKTT. Mn(2+) is bound by residues Lys212 and His231. Residue Asp268 participates in Mn(2+) binding. ATP is bound by residues Glu296, Arg332, 448–449, and Thr454; that span reads RI. Arg332 is a substrate binding site.

Belongs to the phosphoenolpyruvate carboxykinase (ATP) family. In terms of assembly, monomer. Mn(2+) serves as cofactor.

Its subcellular location is the cytoplasm. It catalyses the reaction oxaloacetate + ATP = phosphoenolpyruvate + ADP + CO2. It functions in the pathway carbohydrate biosynthesis; gluconeogenesis. In terms of biological role, involved in the gluconeogenesis. Catalyzes the conversion of oxaloacetate (OAA) to phosphoenolpyruvate (PEP) through direct phosphoryl transfer between the nucleoside triphosphate and OAA. In Yersinia enterocolitica serotype O:8 / biotype 1B (strain NCTC 13174 / 8081), this protein is Phosphoenolpyruvate carboxykinase (ATP).